A 482-amino-acid polypeptide reads, in one-letter code: Membrane-bound lytic murein transglycosylase F (482 aa).

The first 18 residues, M1–A18, serve as a signal peptide directing secretion. The non-LT domain stretch occupies residues I19–I267. The LT domain stretch occupies residues S268–D482. E312 is a catalytic residue. Over residues E457–A470 the composition is skewed to polar residues. The segment at E457–D482 is disordered. The segment covering N473–D482 has biased composition (basic and acidic residues).

In the N-terminal section; belongs to the bacterial solute-binding protein 3 family. The protein in the C-terminal section; belongs to the transglycosylase Slt family.

It is found in the cell outer membrane. It carries out the reaction Exolytic cleavage of the (1-&gt;4)-beta-glycosidic linkage between N-acetylmuramic acid (MurNAc) and N-acetylglucosamine (GlcNAc) residues in peptidoglycan, from either the reducing or the non-reducing ends of the peptidoglycan chains, with concomitant formation of a 1,6-anhydrobond in the MurNAc residue.. Murein-degrading enzyme that degrades murein glycan strands and insoluble, high-molecular weight murein sacculi, with the concomitant formation of a 1,6-anhydromuramoyl product. Lytic transglycosylases (LTs) play an integral role in the metabolism of the peptidoglycan (PG) sacculus. Their lytic action creates space within the PG sacculus to allow for its expansion as well as for the insertion of various structures such as secretion systems and flagella. This Haemophilus influenzae (strain 86-028NP) protein is Membrane-bound lytic murein transglycosylase F.